A 96-amino-acid chain; its full sequence is uncharacterized protein (96 aa).

A signal peptide spans 1–19 (MKFLSALLLIVLLISVVFG). N20 carries an N-linked (GlcNAc...) asparagine glycan. Residues 27–46 (AWATTTTGGTTGSQTSPATH) show a composition bias toward low complexity. The tract at residues 27–58 (AWATTTTGGTTGSQTSPATHGGHGGNGGNGHS) is disordered. The segment covering 47-56 (GGHGGNGGNG) has biased composition (gly residues).

It is found in the secreted. This is an uncharacterized protein from Dictyostelium discoideum (Social amoeba).